A 166-amino-acid chain; its full sequence is UPF0134 protein MPN_138 (166 aa).

This sequence belongs to the UPF0134 family.

The protein is UPF0134 protein MPN_138 of Mycoplasma pneumoniae (strain ATCC 29342 / M129 / Subtype 1) (Mycoplasmoides pneumoniae).